A 528-amino-acid chain; its full sequence is Cytochrome P450 monooxygenase ppsD (528 aa).

The helical transmembrane segment at 2 to 21 (LVLVSLVLCLTGFCLLQWAL) threads the bilayer. The N-linked (GlcNAc...) asparagine glycan is linked to Asn-137. Residue Cys-441 participates in heme binding. Asn-450 and Asn-463 each carry an N-linked (GlcNAc...) asparagine glycan.

The protein belongs to the cytochrome P450 family. The cofactor is heme.

It is found in the membrane. Cytochrome P450 monooxygenase; part of the gene cluster that mediates the biosynthesis of 2,4'-dihydroxy-3'-methoxypropiophenone. The first step of the pathway is the conversion of acetate into acetyl-CoA by the acyl-CoA ligase ppsA. Acetyl-CoA is then used as a starter unit by the polyketide synthase ppsB and condensed with 4 malonyl-CoA unit to produce the pentaketide backbone. During polyketide extension, the polykedite chain is probably reduced and dehydrated by the KR and PT domains, respectively. O-methylation seems to be catalyzed by an unknown methyltransferase rather than by the CMeT domain of ppsB. Two hydroxylations and one further decarboxylation step catalyzed by yet unknown enzymes are then required to yield 4'-hydroxy-3'-methoxypropiophenone. PpsC functions as a carrier protein to transport 4'-hydroxy-3'-methoxypropiophenone to a specific cell compartment in which 4'-hydroxy-3'-methoxypropiophenone is hydroxylated to 2,4'-dihydroxy-3'-methoxypropiophenone by a still to be identified enzyme. In Aspergillus oryzae (strain ATCC 42149 / RIB 40) (Yellow koji mold), this protein is Cytochrome P450 monooxygenase ppsD.